Reading from the N-terminus, the 120-residue chain is Aspartate 1-decarboxylase (120 aa).

Catalysis depends on Ser-24, which acts as the Schiff-base intermediate with substrate; via pyruvic acid. Pyruvic acid (Ser) is present on Ser-24. Thr-56 is a substrate binding site. The Proton donor role is filled by Tyr-57. 70–72 (GAA) lines the substrate pocket.

It belongs to the PanD family. Heterooctamer of four alpha and four beta subunits. The cofactor is pyruvate. Post-translationally, is synthesized initially as an inactive proenzyme, which is activated by self-cleavage at a specific serine bond to produce a beta-subunit with a hydroxyl group at its C-terminus and an alpha-subunit with a pyruvoyl group at its N-terminus.

Its subcellular location is the cytoplasm. It catalyses the reaction L-aspartate + H(+) = beta-alanine + CO2. It participates in cofactor biosynthesis; (R)-pantothenate biosynthesis; beta-alanine from L-aspartate: step 1/1. Functionally, catalyzes the pyruvoyl-dependent decarboxylation of aspartate to produce beta-alanine. This chain is Aspartate 1-decarboxylase, found in Pyrobaculum islandicum (strain DSM 4184 / JCM 9189 / GEO3).